Reading from the N-terminus, the 400-residue chain is Deoxyguanosinetriphosphate triphosphohydrolase-like protein (400 aa).

The HD domain occupies 73–215 (RLTHSIEVSQ…AAIADDIAYN (143 aa)).

This sequence belongs to the dGTPase family. Type 2 subfamily.

This Bartonella quintana (strain Toulouse) (Rochalimaea quintana) protein is Deoxyguanosinetriphosphate triphosphohydrolase-like protein.